We begin with the raw amino-acid sequence, 579 residues long: Extracellular serine/threonine protein kinase FAM20C (579 aa).

Over 1–10 (MKMILVRRFR) the chain is Cytoplasmic. Residues 1 to 87 (MKMILVRRFR…PNKHTLRILQ (87 aa)) constitute a propeptide that is removed on maturation. A helical; Signal-anchor for type II membrane protein transmembrane segment spans residues 11–31 (VLILVVFLLACALHIAVDLLP). At 32–579 (KLDRRATRSS…ATEHRASTER (548 aa)) the chain is on the lumenal side. The tract at residues 38–79 (TRSSGEPGCSCAQPAAEAAGPGWAQARSRPGESAGGDAGWPN) is disordered. The span at 49–63 (AQPAAEAAGPGWAQA) shows a compositional bias: low complexity. Asparagine 96 carries N-linked (GlcNAc...) asparagine glycosylation. Positions 104–155 (KLPSAAEPVDHAPRGQEPRSPPPRDPAHRPLLRDPGPRPRVPPPGPSGDGSL) are disordered. 2 stretches are compositionally biased toward basic and acidic residues: residues 111–120 (PVDHAPRGQE) and 128–140 (DPAHRPLLRDPGP). Residues glutamine 264, lysine 280, and glutamate 301 each coordinate ATP. Glutamate 301 serves as a coordination point for Mn(2+). The kinase domain stretch occupies residues 349-560 (FVSPANNICF…AVRDCVEKDG (212 aa)). Intrachain disulfides connect cysteine 357–cysteine 373 and cysteine 362–cysteine 366. 384–387 (AAFL) contacts ATP. Cystine bridges form between cysteine 421–cysteine 495 and cysteine 496–cysteine 555. Aspartate 453 is a catalytic residue. Positions 458 and 473 each coordinate ATP. Aspartate 473 provides a ligand contact to Mn(2+).

This sequence belongs to the FAM20 family. In terms of assembly, homodimer; disulfide-linked. Interacts with FAM20A; probably forming a heterotetramer of 2 subunits of FAM20A and 2 subunits of FAM20C. Interacts with COPII components SEC23A and SEC24A; transport of FAM20C from the endoplasmic reticulum to the Golgi is likely to be mediated by COPII vesicles. The cofactor is Mn(2+). In terms of processing, N-glycosylation is required for folding. Post-translationally, autophosphorylated. Propeptide cleavage by MBTPS1/S1P promotes FAM20C secretion and maximal kinase activity which is essential for efficient osteoblast differentiation and biomineralization. As to expression, in the mammary gland, expressed at higher levels in lactating mice than in virgin mice (at protein level). Highly expressed in the tooth. No expression in the dental pulp. At the secretory stage of amelogenesis, it is detected in the matrix of the enamel, in the ameloblasts, and within the cells adjoining the stratum intermedium (a tissue layer analogous to the stellate reticulum seen in the developing molar). Strong expression is observed in maturation stage ameloblasts and throughout the non-cornified layers of the gingival epithelium. Expressed at moderate levels in bone and at low levels in kidney, liver, brain and lung. Very low expression, if any, in spleen and skeletal muscle.

The protein localises to the golgi apparatus membrane. It localises to the secreted. Its subcellular location is the endoplasmic reticulum. It carries out the reaction L-seryl-[protein] + ATP = O-phospho-L-seryl-[protein] + ADP + H(+). The enzyme catalyses L-threonyl-[protein] + ATP = O-phospho-L-threonyl-[protein] + ADP + H(+). Serine/threonine protein kinase activity is increased upon interaction with FAM20A. In terms of biological role, golgi serine/threonine protein kinase that phosphorylates secretory pathway proteins within Ser-x-Glu/pSer motifs and plays a key role in biomineralization of bones and teeth. Constitutes the main protein kinase for extracellular proteins, generating the majority of the extracellular phosphoproteome. Mainly phosphorylates proteins within the Ser-x-Glu/pSer motif, but also displays a broader substrate specificity. Phosphorylates ERO1A, enhancing its activity which is required to maintain endoplasmic reticulum redox homeostasis and for oxidative protein folding. During endoplasmic reticulum stress, phosphorylates P4HB/PDIA1 which induces a functional switch, causing P4HB to change from an oxidoreductase to a molecular chaperone. This is critical to maintain ER proteostasis and reduce cell death under ER stress. Phosphorylation of P4HB also promotes its interaction with ERN1, leading to reduced activity of ERN1, a key sensor for the endoplasmic reticulum unfolded protein response. Required for osteoblast differentiation and mineralization. Phosphorylates casein as well as a number of proteins involved in biomineralization such as AMELX, AMTN, ENAM and SPP1. In addition to its role in biomineralization, also plays a role in lipid homeostasis, wound healing and cell migration and adhesion. This is Extracellular serine/threonine protein kinase FAM20C from Mus musculus (Mouse).